The chain runs to 367 residues: Leucine-rich repeat-containing protein 28 (367 aa).

LRR repeat units lie at residues 16–36, 42–63, 66–87, 89–111, 112–133, 135–156, 158–179, 181–202, and 204–226; these read KHKN…ELLK, YLER…LAQK, NLVE…IGSL, KLQS…GRLK, SLRH…IGKL, ELQT…LYQC, SLQY…LCQL, SLNE…LGRS, and ELQY…LYNK.

The sequence is that of Leucine-rich repeat-containing protein 28 (lrrc28) from Xenopus tropicalis (Western clawed frog).